Consider the following 191-residue polypeptide: UPF0312 protein Sbal_3041 (191 aa).

The signal sequence occupies residues 1–22; that stretch reads MKKQLLSALIGASLLAPMAASA.

It belongs to the UPF0312 family. Type 1 subfamily.

It is found in the periplasm. This chain is UPF0312 protein Sbal_3041, found in Shewanella baltica (strain OS155 / ATCC BAA-1091).